The primary structure comprises 160 residues: Small ribosomal subunit protein uS7 (160 aa).

This sequence belongs to the universal ribosomal protein uS7 family. In terms of assembly, part of the 30S ribosomal subunit. Contacts proteins S9 and S11.

One of the primary rRNA binding proteins, it binds directly to 16S rRNA where it nucleates assembly of the head domain of the 30S subunit. Is located at the subunit interface close to the decoding center, probably blocks exit of the E-site tRNA. This Rickettsia prowazekii (strain Madrid E) protein is Small ribosomal subunit protein uS7.